The primary structure comprises 144 residues: Large ribosomal subunit protein uL24 (144 aa).

The disordered stretch occupies residues 102 to 144 (NIVVEKPEPEPEPRKEETAEAQEAKEEAVAEEKTEVDDNDKQN). The span at 103–134 (IVVEKPEPEPEPRKEETAEAQEAKEEAVAEEK) shows a compositional bias: basic and acidic residues. Residues 135–144 (TEVDDNDKQN) are compositionally biased toward acidic residues.

Belongs to the universal ribosomal protein uL24 family. As to quaternary structure, part of the 50S ribosomal subunit.

Its function is as follows. One of two assembly initiator proteins, it binds directly to the 5'-end of the 23S rRNA, where it nucleates assembly of the 50S subunit. Functionally, located at the polypeptide exit tunnel on the outside of the subunit. The protein is Large ribosomal subunit protein uL24 (rpl24) of Thermoplasma acidophilum (strain ATCC 25905 / DSM 1728 / JCM 9062 / NBRC 15155 / AMRC-C165).